Here is a 201-residue protein sequence, read N- to C-terminus: MLVKTLYYRLVEGTFAKAMLVLDEKGTLYYASLGEDSNALRETLVTDFASKQRQFQLKPMVTLSNHERADYTALCFLKLMEEEEDWKNEGEESLQQKGAKRIPIEFIFGTELQRKVWQQLLEIPVGEVRYYGNIVEALGLPKSASRAVGNACGANKIALVVPCHRVIAQTGKLTGYRWGLATKKQILKMELGDAYTTLVSE.

DNA contacts are provided by Tyr-131, Gly-132, and Arg-146. Cys-163 functions as the Nucleophile; methyl group acceptor in the catalytic mechanism.

This sequence belongs to the MGMT family.

The protein resides in the nucleus. It catalyses the reaction a 6-O-methyl-2'-deoxyguanosine in DNA + L-cysteinyl-[protein] = S-methyl-L-cysteinyl-[protein] + a 2'-deoxyguanosine in DNA. It carries out the reaction a 4-O-methyl-thymidine in DNA + L-cysteinyl-[protein] = a thymidine in DNA + S-methyl-L-cysteinyl-[protein]. In terms of biological role, involved in the cellular defense against the biological effects of O6-methylguanine (O6-MeG) and O4-methylthymine (O4-MeT) in DNA. Repairs the methylated nucleobase in DNA by stoichiometrically transferring the methyl group to a cysteine residue in the enzyme. This is a suicide reaction: the enzyme is irreversibly inactivated. The sequence is that of Methylated-DNA--protein-cysteine methyltransferase (MGT1) from Lodderomyces elongisporus (strain ATCC 11503 / CBS 2605 / JCM 1781 / NBRC 1676 / NRRL YB-4239) (Yeast).